Consider the following 307-residue polypeptide: MSKKLKAAIIGPGNIGTDLVMKMLRSEWIEPVWMVGIDPESDGLKRAREFGLKTTAEGVDGLLPHVLEDDIRIAFDATSAYVHAENSRKLNELGVLMVDLTPAAIGPYCVPPVNLKQHVGTLEMNVNMVTCGGQATIPMVAAVSRVQPVAYGEIVATVSSRSIGPGTRKNIDEFTRTTAGAIEQVGGAKEGKAIIVVNPAEPPLMMRDTIHCLTETEPDQDAITASVHAMIAEVQKYVPGYRLKNGPVFDGNRVSIFMEVEGLGDYLPKYAGNLDIMTAAALRTGEMFAEEIASGTIQLPRREAALA.

Cysteine 131 serves as the catalytic Acyl-thioester intermediate. NAD(+) is bound by residues 162–170 and asparagine 273; that span reads SIGPGTRKN.

This sequence belongs to the acetaldehyde dehydrogenase family.

The catalysed reaction is acetaldehyde + NAD(+) + CoA = acetyl-CoA + NADH + H(+). This Stutzerimonas stutzeri (Pseudomonas stutzeri) protein is Acetaldehyde dehydrogenase (nahO).